The sequence spans 239 residues: Sugar fermentation stimulation protein homolog (239 aa).

Belongs to the SfsA family.

This Shewanella woodyi (strain ATCC 51908 / MS32) protein is Sugar fermentation stimulation protein homolog.